The following is an 874-amino-acid chain: Alanine--tRNA ligase (874 aa).

Zn(2+) contacts are provided by H564, H568, C665, and H669.

It belongs to the class-II aminoacyl-tRNA synthetase family. Zn(2+) is required as a cofactor.

It localises to the cytoplasm. It carries out the reaction tRNA(Ala) + L-alanine + ATP = L-alanyl-tRNA(Ala) + AMP + diphosphate. Functionally, catalyzes the attachment of alanine to tRNA(Ala) in a two-step reaction: alanine is first activated by ATP to form Ala-AMP and then transferred to the acceptor end of tRNA(Ala). Also edits incorrectly charged Ser-tRNA(Ala) and Gly-tRNA(Ala) via its editing domain. The sequence is that of Alanine--tRNA ligase from Paraburkholderia phytofirmans (strain DSM 17436 / LMG 22146 / PsJN) (Burkholderia phytofirmans).